We begin with the raw amino-acid sequence, 151 residues long: MNKTTRVMPAHKHIALVAHDNYKPELLRWVKENKDALQGHFLYATGTTGRILSKETGLAIKSLLSGPMGGDQQLGALISEGKIDMMIFFWDPLNAVPHDPDVKALLRIATVWNVPVAMNRASAKFMISAPQMAEEVSIEIPDYDAYLAERV.

The region spanning 6–151 (RVMPAHKHIA…DYDAYLAERV (146 aa)) is the MGS-like domain. Residues His-19, Lys-23, 45 to 48 (TGTT), and 65 to 66 (SG) each bind substrate. Asp-71 (proton donor/acceptor) is an active-site residue. A substrate-binding site is contributed by His-98.

This sequence belongs to the methylglyoxal synthase family.

It carries out the reaction dihydroxyacetone phosphate = methylglyoxal + phosphate. Functionally, catalyzes the formation of methylglyoxal from dihydroxyacetone phosphate. This chain is Methylglyoxal synthase, found in Aliivibrio fischeri (strain MJ11) (Vibrio fischeri).